The chain runs to 252 residues: 3-dehydroquinate dehydratase (252 aa).

Residues S21, 46-48, and R82 each bind 3-dehydroquinate; that span reads EWR. The active-site Proton donor/acceptor is H143. Residue K170 is the Schiff-base intermediate with substrate of the active site. 3-dehydroquinate contacts are provided by R213, S232, and Q236.

This sequence belongs to the type-I 3-dehydroquinase family. As to quaternary structure, homodimer.

The catalysed reaction is 3-dehydroquinate = 3-dehydroshikimate + H2O. It functions in the pathway metabolic intermediate biosynthesis; chorismate biosynthesis; chorismate from D-erythrose 4-phosphate and phosphoenolpyruvate: step 3/7. In terms of biological role, involved in the third step of the chorismate pathway, which leads to the biosynthesis of aromatic amino acids. Catalyzes the cis-dehydration of 3-dehydroquinate (DHQ) and introduces the first double bond of the aromatic ring to yield 3-dehydroshikimate. This is 3-dehydroquinate dehydratase from Escherichia coli O17:K52:H18 (strain UMN026 / ExPEC).